The chain runs to 47 residues: Large ribosomal subunit protein bL34 (47 aa).

2 stretches are compositionally biased toward basic residues: residues 1–22 and 36–47; these read MAKG…HGFR and ARRRKGRKSLTA. The interval 1-47 is disordered; sequence MAKGKRTFQPNNRRRSRVHGFRSRMSTRAGRAIVSARRRKGRKSLTA.

This sequence belongs to the bacterial ribosomal protein bL34 family.

In Corynebacterium kroppenstedtii (strain DSM 44385 / JCM 11950 / CIP 105744 / CCUG 35717), this protein is Large ribosomal subunit protein bL34.